The sequence spans 375 residues: MAIVSSKSPDPAERRSQAKTKPSVSEPQDSLVRPQAAPEESQRPEDQIRPQRLADYIGQPELKDVLGIAIAAAKSRQESLDHLLLYGPPGLGKTTMALVLATEMGVQCRITTAPALERPRDIVGLLVNLQPGDVLFIDEIHRLPKVTEEILYPAMEDFRLDITIGKGQSARTRSITLQPFTLVGATTQIGALTSPLRDRFGLVQRLRFYEVEALTDIVQRTARLLNTPLDQAGAEEIAKRSRGTPRIANRLLRRVRDYAAVKAPGPITGAIAATALELYNVDPCGLDWTDRRLLSHLIENFGGGPVGLETLAAATGEDAQTVEEVYEPYLLQIGYLQRTPRGRVATPAAWRHLGYEPPQASGQLTLQQLLTEPET.

The disordered stretch occupies residues M1 to P50. A large ATPase domain (RuvB-L) region spans residues E13 to Y209. The span at K19–Q28 shows a compositional bias: polar residues. Residues E40 to R49 show a composition bias toward basic and acidic residues. ATP-binding positions include I48, R49, G90, K93, T94, T95, E156–F158, R199, Y209, and R246. T94 contacts Mg(2+). The segment at E210–N280 is small ATPAse domain (RuvB-S). The tract at residues P283 to T375 is head domain (RuvB-H). Positions 338 and 343 each coordinate DNA.

Belongs to the RuvB family. As to quaternary structure, homohexamer. Forms an RuvA(8)-RuvB(12)-Holliday junction (HJ) complex. HJ DNA is sandwiched between 2 RuvA tetramers; dsDNA enters through RuvA and exits via RuvB. An RuvB hexamer assembles on each DNA strand where it exits the tetramer. Each RuvB hexamer is contacted by two RuvA subunits (via domain III) on 2 adjacent RuvB subunits; this complex drives branch migration. In the full resolvosome a probable DNA-RuvA(4)-RuvB(12)-RuvC(2) complex forms which resolves the HJ.

It is found in the cytoplasm. The enzyme catalyses ATP + H2O = ADP + phosphate + H(+). In terms of biological role, the RuvA-RuvB-RuvC complex processes Holliday junction (HJ) DNA during genetic recombination and DNA repair, while the RuvA-RuvB complex plays an important role in the rescue of blocked DNA replication forks via replication fork reversal (RFR). RuvA specifically binds to HJ cruciform DNA, conferring on it an open structure. The RuvB hexamer acts as an ATP-dependent pump, pulling dsDNA into and through the RuvAB complex. RuvB forms 2 homohexamers on either side of HJ DNA bound by 1 or 2 RuvA tetramers; 4 subunits per hexamer contact DNA at a time. Coordinated motions by a converter formed by DNA-disengaged RuvB subunits stimulates ATP hydrolysis and nucleotide exchange. Immobilization of the converter enables RuvB to convert the ATP-contained energy into a lever motion, pulling 2 nucleotides of DNA out of the RuvA tetramer per ATP hydrolyzed, thus driving DNA branch migration. The RuvB motors rotate together with the DNA substrate, which together with the progressing nucleotide cycle form the mechanistic basis for DNA recombination by continuous HJ branch migration. Branch migration allows RuvC to scan DNA until it finds its consensus sequence, where it cleaves and resolves cruciform DNA. The polypeptide is Holliday junction branch migration complex subunit RuvB (Synechococcus elongatus (strain ATCC 33912 / PCC 7942 / FACHB-805) (Anacystis nidulans R2)).